A 305-amino-acid chain; its full sequence is RNA-binding protein with serine-rich domain 1 (305 aa).

The segment covering 1–10 has biased composition (basic residues); it reads MDLSGVKKKS. Positions 1–161 are necessary for interaction with SRP54, nuclear localization and exon-skipping; sequence MDLSGVKKKS…KRRSPSPKPT (161 aa). The segment at 1–170 is disordered; the sequence is MDLSGVKKKS…TKVHIGRLTR (170 aa). Residues 1-220 form a necessary for interaction with the cleaved p110 isoform of CDC2L1 region; it reads MDLSGVKKKS…ENPDEAEKAL (220 aa). Residues Lys-7 and Lys-15 each participate in a glycyl lysine isopeptide (Lys-Gly) (interchain with G-Cter in SUMO2) cross-link. A compositionally biased stretch (basic and acidic residues) spans 33–59; the sequence is DRSDEKSKDRSKDKGATKESSEKDRGR. At Ser-53 the chain carries Phosphoserine. Low complexity predominate over residues 68-126; sequence ASSGSSSTRSRSSSTSSSGSSTSTGSSSGSSSSSASSRSGSSSTSRSSSSSSSSGSPSP. Residues 69 to 121 are necessary for interactions with UPF2 and UPF3B and UPF2-dependent NMD; the sequence is SSGSSSTRSRSSSTSSSGSSTSTGSSSGSSSSSASSRSGSSSTSRSSSSSSSS. Basic residues-rich tracts occupy residues 127 to 143 and 151 to 167; these read SRRR…KSKP and RKRR…HIGR. A phosphoserine mark is found at Ser-155 and Ser-157. The segment at 156-242 is necessary for interaction with PNN and exon-skipping; sequence PSPKPTKVHI…ITATAVLAPW (87 aa). Residues 159–244 form an interaction with SAP18 and ACIN1 region; the sequence is KPTKVHIGRL…ATAVLAPWPR (86 aa). The residue at position 161 (Thr-161) is a Phosphothreonine. Positions 161–240 constitute an RRM domain; that stretch reads TKVHIGRLTR…QEITATAVLA (80 aa). Lys-218 bears the N6-acetyllysine mark. The tract at residues 238-305 is necessary for interaction with TRA2B, nuclear localization and exon-skipping; it reads VLAPWPRPPP…RSRSSSNSSR (68 aa). Residues 240-305 form a disordered region; it reads APWPRPPPRR…RSRSSSNSSR (66 aa). The span at 242-261 shows a compositional bias: pro residues; the sequence is WPRPPPRRFSPPRRMLPPLP. Residues 266-298 are compositionally biased toward basic residues; sequence SPPRMRRRSRSPRRRSPARRRSRSPGRRRHRSR.

This sequence belongs to the splicing factor SR family. Found in mRNA splicing-dependent exon junction complexes (EJC). Found in a post-splicing complex with NXF1, RBM8A, UPF1, UPF2, UPF3A, UPF3B and RNPS1. Component of the heterotrimeric ASAP (apoptosis- and splicing-associated protein) and PSAP complexes consisting of RNPS1, SAP18 and either ACIN1 or PNN, respectively; the ASAP and PSAP complexes probably are formed mutually exclusive. Component of the active spliceosome. Associates with polysomes. Interacts with the cleaved p110 isoform of CDC2L1, CSNK2A1, PNN, SART3, SRP54, SRRM1 and TRA2B/SFRS10. Post-translationally, phosphorylated on one or more of the four Ser/Thr residues (Ser-43, Thr-49, Ser-52 or Ser-53). Ser-53 phosphorylation site is important for splicing and translation stimulation activity in vitro.

It is found in the nucleus. The protein resides in the nucleus speckle. Its subcellular location is the cytoplasm. In terms of biological role, part of pre- and post-splicing multiprotein mRNP complexes. Auxiliary component of the splicing-dependent multiprotein exon junction complex (EJC) deposited at splice junction on mRNAs. The EJC is a dynamic structure consisting of core proteins and several peripheral nuclear and cytoplasmic associated factors that join the complex only transiently either during EJC assembly or during subsequent mRNA metabolism. Component of the ASAP and PSAP complexes which bind RNA in a sequence-independent manner and are proposed to be recruited to the EJC prior to or during the splicing process and to regulate specific excision of introns in specific transcription subsets. The ASAP complex can inhibit RNA processing during in vitro splicing reactions. The ASAP complex promotes apoptosis and is disassembled after induction of apoptosis. Enhances the formation of the ATP-dependent A complex of the spliceosome. Involved in both constitutive splicing and, in association with SRP54 and TRA2B/SFRS10, in distinctive modulation of alternative splicing in a substrate-dependent manner. Involved in the splicing modulation of BCL2L1/Bcl-X (and probably other apoptotic genes); specifically inhibits formation of proapoptotic isoforms such as Bcl-X(S); the activity is different from the established EJC assembly and function. Participates in mRNA 3'-end cleavage. Involved in UPF2-dependent nonsense-mediated decay (NMD) of mRNAs containing premature stop codons. Also mediates increase of mRNA abundance and translational efficiency. Binds spliced mRNA 20-25 nt upstream of exon-exon junctions. In Bos taurus (Bovine), this protein is RNA-binding protein with serine-rich domain 1 (RNPS1).